The chain runs to 95 residues: Small ribosomal subunit protein bS6 (95 aa).

The protein belongs to the bacterial ribosomal protein bS6 family.

In terms of biological role, binds together with bS18 to 16S ribosomal RNA. This Corynebacterium efficiens (strain DSM 44549 / YS-314 / AJ 12310 / JCM 11189 / NBRC 100395) protein is Small ribosomal subunit protein bS6.